A 97-amino-acid chain; its full sequence is Secreted RxLR effector protein BLR05 (97 aa).

The N-terminal stretch at 1–21 (MGPQHLLALVVVSILVAAGNA) is a signal peptide. A RxLR-dEER motif is present at residues 32 to 60 (RALRPSVIADQEHAVHAIPATNFISKDED). A helical membrane pass occupies residues 69 to 89 (IEIIRIAIFSLLVVGVFAIMA).

Belongs to the RxLR effector family. As to quaternary structure, interacts with host transcription factor NAC069.

It is found in the secreted. The protein localises to the host endoplasmic reticulum membrane. In terms of biological role, secreted effector that inhibits stress-induced relocalization of the transcription factor NAC069 to the nucleus, thus affecting its broad role in abiotic and biotic stress responses. This is Secreted RxLR effector protein BLR05 from Bremia lactucae (Lettuce downy mildew).